We begin with the raw amino-acid sequence, 382 residues long: MKTELSLLDRSLNLQRYPKRAQELLQAWDAGDEYIIKYVEEELNLEDGKNILILNDNFGALSCWFSDKHNVTMMTDSFVSQRGTLKNLQRNQCNRVQLITSTEEMPQGFDLVLMQIPKNNRMLTWQLQQLRQSMDSSCPIIAVNKAKEIHSSTLELFEDYLGETKTSLAWKKHRLVFSNANASNPKTIAEAVCWSVDNEDIDLLNYPNVYSGEKLDQGARFMLEHIPSDPELRHIIDLGCGNGVLSVKAGQLNPEARITCVDESFMAVESARRNLEVNLGKERQFQFIANNCLDGFKKHSSYLVLCNPPFHQGQAITDHIAWQMFCDAKHILCKDGKLLVIGNRHLDYDGKLCRLFGEENVTTVASNSKFVILEAVKAEKSK.

Belongs to the methyltransferase superfamily. RlmG family.

The protein localises to the cytoplasm. The enzyme catalyses guanosine(1835) in 23S rRNA + S-adenosyl-L-methionine = N(2)-methylguanosine(1835) in 23S rRNA + S-adenosyl-L-homocysteine + H(+). In terms of biological role, specifically methylates the guanine in position 1835 (m2G1835) of 23S rRNA. In Aliivibrio fischeri (strain MJ11) (Vibrio fischeri), this protein is Ribosomal RNA large subunit methyltransferase G.